We begin with the raw amino-acid sequence, 486 residues long: Regulatory protein ViaA (486 aa).

This sequence belongs to the ViaA family. In terms of assembly, homodimer. Interacts with RavA.

The protein localises to the cytoplasm. Its function is as follows. Component of the RavA-ViaA chaperone complex, which may act on the membrane to optimize the function of some of the respiratory chains. ViaA stimulates the ATPase activity of RavA. The chain is Regulatory protein ViaA from Erwinia tasmaniensis (strain DSM 17950 / CFBP 7177 / CIP 109463 / NCPPB 4357 / Et1/99).